A 125-amino-acid chain; its full sequence is uncharacterized protein (125 aa).

This is an uncharacterized protein from Acanthamoeba polyphaga (Amoeba).